We begin with the raw amino-acid sequence, 298 residues long: D-alanine--D-alanine ligase (298 aa).

The ATP-grasp domain maps to 97–290 (FYSLFKNYIQ…FDELINIIIK (194 aa)). 124–173 (PFIIKPRKSGSSKGVYIIHNENEYKFYLEKDLKEFQEVLVQEYIKGREIT) provides a ligand contact to ATP. Residues aspartate 245, glutamate 257, and asparagine 259 each contribute to the Mg(2+) site.

The protein belongs to the D-alanine--D-alanine ligase family. The cofactor is Mg(2+). It depends on Mn(2+) as a cofactor.

It is found in the cytoplasm. The catalysed reaction is 2 D-alanine + ATP = D-alanyl-D-alanine + ADP + phosphate + H(+). The protein operates within cell wall biogenesis; peptidoglycan biosynthesis. In terms of biological role, cell wall formation. This is D-alanine--D-alanine ligase from Petrotoga mobilis (strain DSM 10674 / SJ95).